A 366-amino-acid chain; its full sequence is Beta sliding clamp (366 aa).

Belongs to the beta sliding clamp family. Forms a ring-shaped head-to-tail homodimer around DNA which binds and tethers DNA polymerases and other proteins to the DNA. The DNA replisome complex has a single clamp-loading complex (3 tau and 1 each of delta, delta', psi and chi subunits) which binds 3 Pol III cores (1 core on the leading strand and 2 on the lagging strand) each with a beta sliding clamp dimer. Additional proteins in the replisome are other copies of gamma, psi and chi, Ssb, DNA helicase and RNA primase.

The protein localises to the cytoplasm. Its function is as follows. Confers DNA tethering and processivity to DNA polymerases and other proteins. Acts as a clamp, forming a ring around DNA (a reaction catalyzed by the clamp-loading complex) which diffuses in an ATP-independent manner freely and bidirectionally along dsDNA. Initially characterized for its ability to contact the catalytic subunit of DNA polymerase III (Pol III), a complex, multichain enzyme responsible for most of the replicative synthesis in bacteria; Pol III exhibits 3'-5' exonuclease proofreading activity. The beta chain is required for initiation of replication as well as for processivity of DNA replication. The chain is Beta sliding clamp (dnaN) from Haemophilus influenzae (strain ATCC 51907 / DSM 11121 / KW20 / Rd).